Here is a 244-residue protein sequence, read N- to C-terminus: DNA polymerase sliding clamp (244 aa).

This sequence belongs to the PCNA family. Homotrimer. The subunits circularize to form a toroid; DNA passes through its center. Replication factor C (RFC) is required to load the toroid on the DNA.

Sliding clamp subunit that acts as a moving platform for DNA processing. Responsible for tethering the catalytic subunit of DNA polymerase and other proteins to DNA during high-speed replication. This Methanobrevibacter smithii (strain ATCC 35061 / DSM 861 / OCM 144 / PS) protein is DNA polymerase sliding clamp.